The sequence spans 577 residues: MPKTISVRVTTMDAELEFAIQPNTTGKQLFDQVVKTIGLREVWFFGLQYQDTKGFSTWLKLNKKVTAQDVRKESPLLFKFRAKFYPEDVSEELIQDITQRLFFLQVKEGILNDDIYCPPETAVLLASYAVQSKYGDFNKEVHKSGYLAGDKLLPQRVLEQHKLNKDQWEERIQVWHEEHRGMLREDAVLEYLKIAQDLEMYGVNYFSIKNKKGSELWLGVDALGLNIYEQNDRLTPKIGFPWSEIRNISFNDKKFVIKPIDKKAPDFVFYAPRLRINKRILALCMGNHELYMRRRKPDTIEVQQMKAQAREEKHQKQMERAMLENEKKKREMAEKEKEKIEREKEELMERLKQIEEQTKKAQQELEEQTRRALELEQERKRAQSEAEKLAKERQEAEEAKEALLQASRDQKKTQEQLALEMAELTARISQLEMARQKKESEAVEWQQKAQMVQEDLEKTRAELKTAMSTPHVAEPAENEQDEQDENGAEASADLRADAMAKDRSEEERTTEAEKNERVQKHLKALTSELANARDESKKTANDMIHAENMRLGRDKYKTLRQIRQGNTKQRIDEFESM.

One can recognise an FERM domain in the interval 2-295 (PKTISVRVTT…GNHELYMRRR (294 aa)). Phosphoserine is present on Ser-74. N6-acetyllysine is present on Lys-79. The residue at position 83 (Lys-83) is an N6-succinyllysine. The [IL]-x-C-x-x-[DE] motif signature appears at 115–120 (IYCPPE). Tyr-116 is modified (phosphotyrosine). The residue at position 117 (Cys-117) is an S-nitrosocysteine. N6-acetyllysine is present on residues Lys-139 and Lys-165. Disordered stretches follow at residues 323–342 (LENE…KIER), 375–409 (LEQE…ASRD), and 466–518 (AMST…NERV). A compositionally biased stretch (basic and acidic residues) spans 375–401 (LEQERKRAQSEAEKLAKERQEAEEAKE). At Ser-407 the chain carries Phosphoserine. Over residues 476 to 487 (AENEQDEQDENG) the composition is skewed to acidic residues. A compositionally biased stretch (basic and acidic residues) spans 492-518 (ADLRADAMAKDRSEEERTTEAEKNERV). Ser-527 bears the Phosphoserine mark. Thr-558 bears the Phosphothreonine; by ROCK2 and STK10 mark.

In terms of assembly, in resting T-cells, part of a PAG1-NHERF1-MSN complex which is disrupted upon TCR activation. Interacts with NHERF1. Interacts with PPP1R16B. Interacts with SELPLG and SYK; these interactions mediate the activation of SYK by SELPLG. Interacts with PDPN (via cytoplasmic domain); this interaction activates RHOA and promotes epithelial-mesenchymal transition. Interacts with SPN/CD43 cytoplasmic tail. Interacts with CD44. Interacts with ICAM2. Interacts with ICAM3 (via C-terminus). Interacts with PDZD8. Interacts with F-actin. Interacts with CD46. Interacts with PTPN6. (Microbial infection) Interacts with HIV-1 envelope protein gp120. In terms of processing, phosphorylation on Thr-558 is crucial for the formation of microvilli-like structures. Phosphorylation by ROCK2 suppresses the head-to-tail association of the N-terminal and C-terminal halves resulting in an opened conformation which is capable of actin and membrane-binding. Phosphorylation on Thr-558 by STK10 negatively regulates lymphocyte migration and polarization. Post-translationally, S-nitrosylation of Cys-117 is induced by interferon-gamma and oxidatively-modified low-densitity lipoprotein (LDL(ox)) implicating the iNOS-S100A8/9 transnitrosylase complex. In all tissues and cultured cells studied.

It is found in the cell membrane. It localises to the cytoplasm. The protein resides in the cytoskeleton. Its subcellular location is the apical cell membrane. The protein localises to the cell projection. It is found in the microvillus membrane. It localises to the microvillus. Its activity is regulated as follows. A head-to-tail association, of the N-terminal and C-terminal halves results in a closed conformation (inactive form) which is incapable of actin or membrane-binding. Ezrin-radixin-moesin (ERM) family protein that connects the actin cytoskeleton to the plasma membrane and thereby regulates the structure and function of specific domains of the cell cortex. Tethers actin filaments by oscillating between a resting and an activated state providing transient interactions between moesin and the actin cytoskeleton. Once phosphorylated on its C-terminal threonine, moesin is activated leading to interaction with F-actin and cytoskeletal rearrangement. These rearrangements regulate many cellular processes, including cell shape determination, membrane transport, and signal transduction. The role of moesin is particularly important in immunity acting on both T and B-cells homeostasis and self-tolerance, regulating lymphocyte egress from lymphoid organs. Modulates phagolysosomal biogenesis in macrophages. Also participates in immunologic synapse formation. The chain is Moesin from Homo sapiens (Human).